Here is a 353-residue protein sequence, read N- to C-terminus: MIETDKLQAPRVISAQTADRQEDVVERALRPKRLAEYVGQAKIREQLEIFIQAAKNRHEALDHVLLFGPPGLGKTTLAHIVAAEMGVNLRQTSGPVLERAGDLAALLTNLEPHDVLFIDEIHRLSPVVEEILYPALEDFQIDIMIGEGPAARSVKLDLPPFTLVGATTRAGMLTNPLRDRFGIVARLEFYTPHELAYIVGRSAGLLDVAIDDAGAVEIARRARGTPRIANRLLRRVRDYAQVKADGDITAPVADAALLMLDVDHLGLDLMDRKLLGAMLEKFGGGPVGLDNLAAAIGESSDTIEDVLEPYLIQQGYLQRTPRGRIASASIWQHFGLAFPRRAGDESAELFSAP.

Residues 4–190 (TDKLQAPRVI…FGIVARLEFY (187 aa)) are large ATPase domain (RuvB-L). Residues Leu29, Arg30, Gly71, Lys74, Thr75, Thr76, 137–139 (EDF), Arg180, Tyr190, and Arg227 contribute to the ATP site. Residue Thr75 coordinates Mg(2+). The small ATPAse domain (RuvB-S) stretch occupies residues 191-261 (TPHELAYIVG…VADAALLMLD (71 aa)). The head domain (RuvB-H) stretch occupies residues 264–353 (HLGLDLMDRK…DESAELFSAP (90 aa)). Residues Arg319 and Arg324 each coordinate DNA.

The protein belongs to the RuvB family. In terms of assembly, homohexamer. Forms an RuvA(8)-RuvB(12)-Holliday junction (HJ) complex. HJ DNA is sandwiched between 2 RuvA tetramers; dsDNA enters through RuvA and exits via RuvB. An RuvB hexamer assembles on each DNA strand where it exits the tetramer. Each RuvB hexamer is contacted by two RuvA subunits (via domain III) on 2 adjacent RuvB subunits; this complex drives branch migration. In the full resolvosome a probable DNA-RuvA(4)-RuvB(12)-RuvC(2) complex forms which resolves the HJ.

It localises to the cytoplasm. The catalysed reaction is ATP + H2O = ADP + phosphate + H(+). Its function is as follows. The RuvA-RuvB-RuvC complex processes Holliday junction (HJ) DNA during genetic recombination and DNA repair, while the RuvA-RuvB complex plays an important role in the rescue of blocked DNA replication forks via replication fork reversal (RFR). RuvA specifically binds to HJ cruciform DNA, conferring on it an open structure. The RuvB hexamer acts as an ATP-dependent pump, pulling dsDNA into and through the RuvAB complex. RuvB forms 2 homohexamers on either side of HJ DNA bound by 1 or 2 RuvA tetramers; 4 subunits per hexamer contact DNA at a time. Coordinated motions by a converter formed by DNA-disengaged RuvB subunits stimulates ATP hydrolysis and nucleotide exchange. Immobilization of the converter enables RuvB to convert the ATP-contained energy into a lever motion, pulling 2 nucleotides of DNA out of the RuvA tetramer per ATP hydrolyzed, thus driving DNA branch migration. The RuvB motors rotate together with the DNA substrate, which together with the progressing nucleotide cycle form the mechanistic basis for DNA recombination by continuous HJ branch migration. Branch migration allows RuvC to scan DNA until it finds its consensus sequence, where it cleaves and resolves cruciform DNA. The chain is Holliday junction branch migration complex subunit RuvB from Aromatoleum aromaticum (strain DSM 19018 / LMG 30748 / EbN1) (Azoarcus sp. (strain EbN1)).